The sequence spans 257 residues: MSLAKRIIPCLDVDNGRVVKGVQFVDIRDAGDPVEVAKRYDEQGADEITFLDITATAHERDTIVHVVEEVASQVFIPLTVGGGIRSIEDVRTMLNAGADKVAINSAAIFNPAFVKEACDTFGSQCIVVAIDAKKVSPKGEPDKWEIFTHGGRKETGIDAVEWAKEMETLGAGELLVTSMDKDGTKSGFDLALTRTISDSVKIPVIASGGVGKLSDLCDGITQGHAEAVLAASIFHFGEHTVQEAKQAMQKEGIEVRL.

Catalysis depends on residues Asp-12 and Asp-131.

It belongs to the HisA/HisF family. In terms of assembly, heterodimer of HisH and HisF.

It is found in the cytoplasm. It carries out the reaction 5-[(5-phospho-1-deoxy-D-ribulos-1-ylimino)methylamino]-1-(5-phospho-beta-D-ribosyl)imidazole-4-carboxamide + L-glutamine = D-erythro-1-(imidazol-4-yl)glycerol 3-phosphate + 5-amino-1-(5-phospho-beta-D-ribosyl)imidazole-4-carboxamide + L-glutamate + H(+). It participates in amino-acid biosynthesis; L-histidine biosynthesis; L-histidine from 5-phospho-alpha-D-ribose 1-diphosphate: step 5/9. In terms of biological role, IGPS catalyzes the conversion of PRFAR and glutamine to IGP, AICAR and glutamate. The HisF subunit catalyzes the cyclization activity that produces IGP and AICAR from PRFAR using the ammonia provided by the HisH subunit. In Hydrogenovibrio crunogenus (strain DSM 25203 / XCL-2) (Thiomicrospira crunogena), this protein is Imidazole glycerol phosphate synthase subunit HisF.